We begin with the raw amino-acid sequence, 522 residues long: Tubulin-specific chaperone E (522 aa).

The CAP-Gly domain occupies 27–71 (GNVPPTPGLWLGVEWDNHLRGKHNGTHEGTKYFTCSHPTGGSFIR). LRR repeat units follow at residues 149-170 (NIMT…AHIS), 175-196 (NLTS…SSLA), 201-222 (NLKV…QCAS), 226-248 (ALEE…NNLQ), 249-270 (NLTI…HTIA), 274-295 (RLKQ…DVDF), and 303-324 (SLTS…NELH). The LRRCT domain maps to 337–379 (NPLMDLDKNPETVRQLIIAKIENLKFLNKTEIFPTERRGAELD).

Belongs to the TBCE family. As to quaternary structure, supercomplex made of cofactors A to E. Cofactors A and D function by capturing and stabilizing tubulin in a quasi-native conformation. Cofactor E binds to the cofactor D-tubulin complex; interaction with cofactor C then causes the release of tubulin polypeptides that are committed to the native state.

The protein resides in the cytoplasm. It localises to the cytoskeleton. Functionally, tubulin-folding protein; involved in the second step of the tubulin folding pathway. The protein is Tubulin-specific chaperone E (tbce) of Xenopus laevis (African clawed frog).